The primary structure comprises 377 residues: Chaperone protein DnaJ (377 aa).

The J domain occupies 5–70 (DYYQVLGVSR…KKRSAYDQLG (66 aa)). A CR-type zinc finger spans residues 138-216 (GVTKIISFKT…CYGEGRYINT (79 aa)). The Zn(2+) site is built by Cys-151, Cys-154, Cys-168, Cys-171, Cys-190, Cys-193, Cys-204, and Cys-207. CXXCXGXG motif repeat units follow at residues 151–158 (CEACTGKG), 168–175 (CPTCRGSG), 190–197 (CQTCRGAG), and 204–211 (CTKCYGEG).

The protein belongs to the DnaJ family. In terms of assembly, homodimer. The cofactor is Zn(2+).

The protein localises to the cytoplasm. In terms of biological role, participates actively in the response to hyperosmotic and heat shock by preventing the aggregation of stress-denatured proteins and by disaggregating proteins, also in an autonomous, DnaK-independent fashion. Unfolded proteins bind initially to DnaJ; upon interaction with the DnaJ-bound protein, DnaK hydrolyzes its bound ATP, resulting in the formation of a stable complex. GrpE releases ADP from DnaK; ATP binding to DnaK triggers the release of the substrate protein, thus completing the reaction cycle. Several rounds of ATP-dependent interactions between DnaJ, DnaK and GrpE are required for fully efficient folding. Also involved, together with DnaK and GrpE, in the DNA replication of plasmids through activation of initiation proteins. In Orientia tsutsugamushi (strain Ikeda) (Rickettsia tsutsugamushi), this protein is Chaperone protein DnaJ.